The primary structure comprises 2162 residues: Polyketide synthase 1 (2162 aa).

The interval 19–264 (FVFGDQTSCN…TPLAVHAPYH (246 aa)) is N-terminal acylcarrier protein transacylase domain (SAT). The region spanning 397–841 (DSKIAIIGMS…GGNTALLVED (445 aa)) is the Ketosynthase family 3 (KS3) domain. Residues cysteine 578, histidine 713, and histidine 757 each act as for beta-ketoacyl synthase activity in the active site. The tract at residues 941–1245 (AFVFSGQGSQ…PSLMRSHDGW (305 aa)) is malonyl-CoA:ACP transacylase (MAT) domain. Residue serine 1030 is the For acyl/malonyl transferase activity of the active site. The product template (PT) domain stretch occupies residues 1322 to 1636 (TASVHRIVRE…RRVLDAAMPA (315 aa)). Residues 1326 to 1459 (HRIVRESVDR…SSLCFGESRA (134 aa)) form an N-terminal hotdog fold region. Residues 1326 to 1631 (HRIVRESVDR…FQGVPRRVLD (306 aa)) form the PKS/mFAS DH domain. Catalysis depends on histidine 1358, which acts as the Proton acceptor; for dehydratase activity. A C-terminal hotdog fold region spans residues 1486 to 1631 (LNSRLSSGVI…FQGVPRRVLD (146 aa)). Aspartate 1545 serves as the catalytic Proton donor; for dehydratase activity. The disordered stretch occupies residues 1633–1669 (AMPAPKSPNKTRDHASPNATISRAKPPQGSSPASSAQ). Residues 1658–1669 (PPQGSSPASSAQ) show a composition bias toward low complexity. One can recognise a Carrier 1 domain in the interval 1692–1766 (IDPMHAVLRI…DFAVHLGLDT (75 aa)). Serine 1726 is modified (O-(pantetheine 4'-phosphoryl)serine). The segment covering 1772–1783 (SSGESNVSGGVS) has biased composition (low complexity). The tract at residues 1772–1809 (SSGESNVSGGVSPRSDSVAAMSSDVTTPPAQSPLGSMS) is disordered. Over residues 1794–1809 (SDVTTPPAQSPLGSMS) the composition is skewed to polar residues. The 78-residue stretch at 1807–1884 (SMSSSPCEDL…SFKHVFEQEI (78 aa)) folds into the Carrier 2 domain. Serine 1844 is modified (O-(pantetheine 4'-phosphoryl)serine). The thioesterase (TE) domain stretch occupies residues 1896–2160 (LKKYHATSTL…ERVAAFIRSA (265 aa)). The active-site For thioesterase activity is the serine 1987.

Its function is as follows. Polyketide synthase; part of the Pks1 gene cluster that mediates the biosynthesis of an anthraquinone derivative pigment that contributes to conidial pigmentation that provides protection from UV radiation, heat and cold stress. The polyketide synthase Pks1 produces 1-acetyl-2,4,6,8-tetrahydroxy-9,10-anthraquinone though condensation of acetyl-CoA with malonyl-CoA. The dehydratase EthD and the laccase Mlac1 further convert the anthraquinone derivative into the final conidial pigment. This is Polyketide synthase 1 from Metarhizium album (strain ARSEF 1941).